The chain runs to 387 residues: Succinate--CoA ligase [ADP-forming] subunit beta (387 aa).

Residues 9-243 (KEILSTYGIP…YSQLDPLEIT (235 aa)) enclose the ATP-grasp domain. ATP is bound by residues lysine 45, 52–54 (GRG), glutamate 98, valine 101, and glutamate 106. Mg(2+) is bound by residues asparagine 198 and aspartate 212. Substrate-binding positions include asparagine 263 and 320–322 (GIM).

Belongs to the succinate/malate CoA ligase beta subunit family. Heterotetramer of two alpha and two beta subunits. The cofactor is Mg(2+).

The catalysed reaction is succinate + ATP + CoA = succinyl-CoA + ADP + phosphate. The enzyme catalyses GTP + succinate + CoA = succinyl-CoA + GDP + phosphate. The protein operates within carbohydrate metabolism; tricarboxylic acid cycle; succinate from succinyl-CoA (ligase route): step 1/1. Its function is as follows. Succinyl-CoA synthetase functions in the citric acid cycle (TCA), coupling the hydrolysis of succinyl-CoA to the synthesis of either ATP or GTP and thus represents the only step of substrate-level phosphorylation in the TCA. The beta subunit provides nucleotide specificity of the enzyme and binds the substrate succinate, while the binding sites for coenzyme A and phosphate are found in the alpha subunit. The chain is Succinate--CoA ligase [ADP-forming] subunit beta from Trichlorobacter lovleyi (strain ATCC BAA-1151 / DSM 17278 / SZ) (Geobacter lovleyi).